Consider the following 431-residue polypeptide: Translation initiation factor 2 subunit gamma (431 aa).

The region spanning 26-223 (QPCVNIGMVG…ALETQIPTPS (198 aa)) is the tr-type G domain. A G1 region spans residues 35–42 (GHVDHGKT). Mg(2+) contacts are provided by Asp38, Thr42, Gly63, and Ser65. Residue 38–43 (DHGKTT) coordinates GTP. The segment at 63 to 67 (GISIR) is G2. Residues Cys78, Cys81, Cys93, and Cys96 each contribute to the Zn(2+) site. The segment at 110–113 (DAPG) is G3. Residues 166-169 (NKID) and 201-203 (SAQ) contribute to the GTP site. The tract at residues 166–169 (NKID) is G4. Residues 201-203 (SAQ) form a G5 region.

This sequence belongs to the TRAFAC class translation factor GTPase superfamily. Classic translation factor GTPase family. EIF2G subfamily. As to quaternary structure, heterotrimer composed of an alpha, a beta and a gamma chain. Mg(2+) is required as a cofactor.

The enzyme catalyses GTP + H2O = GDP + phosphate + H(+). In terms of biological role, eIF-2 functions in the early steps of protein synthesis by forming a ternary complex with GTP and initiator tRNA. This is Translation initiation factor 2 subunit gamma from Methanosarcina mazei (strain ATCC BAA-159 / DSM 3647 / Goe1 / Go1 / JCM 11833 / OCM 88) (Methanosarcina frisia).